The chain runs to 231 residues: NADH-ubiquinone oxidoreductase chain 4 (231 aa).

The next 6 helical transmembrane spans lie at 1–21 (PIAG…YGII), 34–54 (MFLP…LTCL), 63–85 (IAYS…TPWG), 89–111 (ALAL…NTTY), 128–148 (ILPM…AIPP), and 169–189 (TIIM…HMFL).

It belongs to the complex I subunit 4 family.

The protein localises to the mitochondrion membrane. The catalysed reaction is a ubiquinone + NADH + 5 H(+)(in) = a ubiquinol + NAD(+) + 4 H(+)(out). Core subunit of the mitochondrial membrane respiratory chain NADH dehydrogenase (Complex I) that is believed to belong to the minimal assembly required for catalysis. Complex I functions in the transfer of electrons from NADH to the respiratory chain. The immediate electron acceptor for the enzyme is believed to be ubiquinone. In Bothrocophias hyoprora (Amazonian hognose viper), this protein is NADH-ubiquinone oxidoreductase chain 4 (MT-ND4).